Reading from the N-terminus, the 57-residue chain is Probable mRNA interferase HicA 1 (57 aa).

It belongs to the HicA mRNA interferase family. In terms of assembly, probably forms a complex with the cognate antitoxin HicB 1 which inhibits the mRNA interferase activity.

Its function is as follows. Toxic component of a type II toxin-antitoxin (TA) system. A probable translation-independent mRNA interferase. In Photorhabdus laumondii subsp. laumondii (strain DSM 15139 / CIP 105565 / TT01) (Photorhabdus luminescens subsp. laumondii), this protein is Probable mRNA interferase HicA 1 (hicA1).